We begin with the raw amino-acid sequence, 324 residues long: Phospho-N-acetylmuramoyl-pentapeptide-transferase (324 aa).

10 consecutive transmembrane segments (helical) span residues 5-25, 52-72, 77-97, 117-137, 147-167, 176-196, 203-223, 227-247, 250-270, and 302-322; these read VILF…PIFI, PTMG…VMTM, VSMN…LGFL, LIGQ…QGMP, LSFD…VGGS, LDGL…ILAW, VAIF…FNAH, VFMG…IAIL, LEIL…SVIL, and VVVT…YIEV.

Belongs to the glycosyltransferase 4 family. MraY subfamily. Mg(2+) is required as a cofactor.

It is found in the cell membrane. It catalyses the reaction UDP-N-acetyl-alpha-D-muramoyl-L-alanyl-gamma-D-glutamyl-meso-2,6-diaminopimeloyl-D-alanyl-D-alanine + di-trans,octa-cis-undecaprenyl phosphate = di-trans,octa-cis-undecaprenyl diphospho-N-acetyl-alpha-D-muramoyl-L-alanyl-D-glutamyl-meso-2,6-diaminopimeloyl-D-alanyl-D-alanine + UMP. Its pathway is cell wall biogenesis; peptidoglycan biosynthesis. Functionally, catalyzes the initial step of the lipid cycle reactions in the biosynthesis of the cell wall peptidoglycan: transfers peptidoglycan precursor phospho-MurNAc-pentapeptide from UDP-MurNAc-pentapeptide onto the lipid carrier undecaprenyl phosphate, yielding undecaprenyl-pyrophosphoryl-MurNAc-pentapeptide, known as lipid I. The polypeptide is Phospho-N-acetylmuramoyl-pentapeptide-transferase (Bacillus licheniformis (strain ATCC 14580 / DSM 13 / JCM 2505 / CCUG 7422 / NBRC 12200 / NCIMB 9375 / NCTC 10341 / NRRL NRS-1264 / Gibson 46)).